The following is a 126-amino-acid chain: 13 kDa ribonucleoprotein-associated protein (126 aa).

Belongs to the eukaryotic ribosomal protein eL8 family. In terms of assembly, component of the U3 snoRNP particle. Binds to the C'/D and B/C motifs in U3 snoRNA. Component of the 25S U4/U6.U5 tri-snRNP particle, a subcomplex of the spliceosome. Binds to the 5' stem-loop of U4 snRNA.

It localises to the nucleus. The protein resides in the nucleolus. Its function is as follows. Common component of the spliceosome and rRNA processing machinery. In association with the spliceosomal U4/U6.U5 tri-snRNP particle, required for splicing of pre-mRNA. In association with box C/D snoRNPs, required for processing of pre-ribosomal RNA (rRNA) and site-specific 2'-O-methylation of substrate RNAs. Essential for the accumulation and stability of U4 snRNA, U6 snRNA, and box C/D snoRNAs. This Candida glabrata (strain ATCC 2001 / BCRC 20586 / JCM 3761 / NBRC 0622 / NRRL Y-65 / CBS 138) (Yeast) protein is 13 kDa ribonucleoprotein-associated protein (SNU13).